We begin with the raw amino-acid sequence, 225 residues long: 2-C-methyl-D-erythritol 4-phosphate cytidylyltransferase (225 aa).

It belongs to the IspD/TarI cytidylyltransferase family. IspD subfamily.

The catalysed reaction is 2-C-methyl-D-erythritol 4-phosphate + CTP + H(+) = 4-CDP-2-C-methyl-D-erythritol + diphosphate. It participates in isoprenoid biosynthesis; isopentenyl diphosphate biosynthesis via DXP pathway; isopentenyl diphosphate from 1-deoxy-D-xylulose 5-phosphate: step 2/6. In terms of biological role, catalyzes the formation of 4-diphosphocytidyl-2-C-methyl-D-erythritol from CTP and 2-C-methyl-D-erythritol 4-phosphate (MEP). The polypeptide is 2-C-methyl-D-erythritol 4-phosphate cytidylyltransferase (Clostridium perfringens (strain ATCC 13124 / DSM 756 / JCM 1290 / NCIMB 6125 / NCTC 8237 / Type A)).